Reading from the N-terminus, the 231-residue chain is MPKRSKRYLEARKLVDRTKAYTIDEAIELLKQMPSAKFDESIELHIKTGIEPSKSDQQVRGTISLPHGTGKNVKVLVFTRGEKVEEAKAAGADFVGSDELIQQIQKGWTDFDVAIATPDMMREIGRLGRILGPRGLMPSPKAGTVTTDVAEAVKAFKAGRVEIKNDKTGNLHFPIGKKSFDSEKLKENLVSALEQISKMKPAAAKGRFIVKVVVAPTMGPGIKLDHQKVVE.

The protein belongs to the universal ribosomal protein uL1 family. In terms of assembly, part of the 50S ribosomal subunit.

Binds directly to 23S rRNA. The L1 stalk is quite mobile in the ribosome, and is involved in E site tRNA release. Its function is as follows. Protein L1 is also a translational repressor protein, it controls the translation of the L11 operon by binding to its mRNA. This is Large ribosomal subunit protein uL1 from Kosmotoga olearia (strain ATCC BAA-1733 / DSM 21960 / TBF 19.5.1).